The chain runs to 433 residues: 3-phosphoshikimate 1-carboxyvinyltransferase (433 aa).

3-phosphoshikimate contacts are provided by Lys23, Ser24, and Arg28. Residue Lys23 coordinates phosphoenolpyruvate. Residues Gly95 and Arg123 each contribute to the phosphoenolpyruvate site. 3-phosphoshikimate-binding residues include Ser167, Gln169, Asp317, and Lys344. A phosphoenolpyruvate-binding site is contributed by Gln169. Asp317 acts as the Proton acceptor in catalysis. Residues Arg348 and Arg390 each contribute to the phosphoenolpyruvate site.

This sequence belongs to the EPSP synthase family. Monomer.

The protein resides in the cytoplasm. The catalysed reaction is 3-phosphoshikimate + phosphoenolpyruvate = 5-O-(1-carboxyvinyl)-3-phosphoshikimate + phosphate. It participates in metabolic intermediate biosynthesis; chorismate biosynthesis; chorismate from D-erythrose 4-phosphate and phosphoenolpyruvate: step 6/7. Functionally, catalyzes the transfer of the enolpyruvyl moiety of phosphoenolpyruvate (PEP) to the 5-hydroxyl of shikimate-3-phosphate (S3P) to produce enolpyruvyl shikimate-3-phosphate and inorganic phosphate. The chain is 3-phosphoshikimate 1-carboxyvinyltransferase from Staphylococcus epidermidis (strain ATCC 35984 / DSM 28319 / BCRC 17069 / CCUG 31568 / BM 3577 / RP62A).